A 619-amino-acid polypeptide reads, in one-letter code: DBH-like monooxygenase protein 2 (619 aa).

Positions 1-21 (MACVLLFRLFLLLVLAAFSQG) are cleaved as a signal peptide. The Extracellular portion of the chain corresponds to 22–594 (KRLGPTSPLR…LSGSNTATLR (573 aa)). The DOMON domain occupies 40 to 156 (RAVFLRWDFD…DTMRVLAAYG (117 aa)). Residue Y209 is part of the active site. Disulfide bonds link C211–C261 and C248–C271. Cu cation is bound by residues H241 and H242. N-linked (GlcNAc...) asparagine glycosylation occurs at N250. The Cu cation site is built by H309, H390, and H392. Intrachain disulfides connect C366-C481 and C444-C466. The active site involves H390. N-linked (GlcNAc...) asparagine glycosylation is present at N405. M465 provides a ligand contact to Cu cation. The N-linked (GlcNAc...) asparagine glycan is linked to N477. The helical transmembrane segment at 595 to 615 (PLPMIAVLFLQGSLSCLLAML) threads the bilayer. Residues 616-619 (QTGV) lie on the Cytoplasmic side of the membrane.

The protein belongs to the copper type II ascorbate-dependent monooxygenase family. Requires Cu(2+) as cofactor. Expressed at low levels in thymus and testis.

The protein resides in the membrane. The protein is DBH-like monooxygenase protein 2 (Moxd2) of Mus musculus (Mouse).